Consider the following 469-residue polypeptide: Ribulose bisphosphate carboxylase large chain (469 aa).

Lys-8 bears the N6,N6,N6-trimethyllysine mark. Substrate-binding residues include Asn-117 and Thr-167. Lys-169 (proton acceptor) is an active-site residue. Residue Lys-171 coordinates substrate. The Mg(2+) site is built by Lys-195, Asp-197, and Glu-198. At Lys-195 the chain carries N6-carboxylysine. Catalysis depends on His-288, which acts as the Proton acceptor. Substrate-binding residues include Arg-289, His-321, and Ser-373.

The protein belongs to the RuBisCO large chain family. Type I subfamily. In terms of assembly, heterohexadecamer of 8 large chains and 8 small chains; disulfide-linked. The disulfide link is formed within the large subunit homodimers. It depends on Mg(2+) as a cofactor. The disulfide bond which can form in the large chain dimeric partners within the hexadecamer appears to be associated with oxidative stress and protein turnover.

Its subcellular location is the plastid. The protein localises to the chloroplast. It carries out the reaction 2 (2R)-3-phosphoglycerate + 2 H(+) = D-ribulose 1,5-bisphosphate + CO2 + H2O. The catalysed reaction is D-ribulose 1,5-bisphosphate + O2 = 2-phosphoglycolate + (2R)-3-phosphoglycerate + 2 H(+). Functionally, ruBisCO catalyzes two reactions: the carboxylation of D-ribulose 1,5-bisphosphate, the primary event in carbon dioxide fixation, as well as the oxidative fragmentation of the pentose substrate in the photorespiration process. Both reactions occur simultaneously and in competition at the same active site. In Persicaria senticosa (Knotweed), this protein is Ribulose bisphosphate carboxylase large chain.